The sequence spans 93 residues: Large ribosomal subunit protein uL23cy (93 aa).

This sequence belongs to the universal ribosomal protein uL23 family. Part of the 50S ribosomal subunit.

It localises to the plastid. The protein localises to the chloroplast. Functionally, binds to 23S rRNA. The chain is Large ribosomal subunit protein uL23cy (rpl23-B) from Sorghum bicolor (Sorghum).